Reading from the N-terminus, the 126-residue chain is Hydrogenase maturation factor HypA (126 aa).

Histidine 2 is a Ni(2+) binding site. Residues cysteine 78, cysteine 81, cysteine 97, and cysteine 100 each coordinate Zn(2+).

Belongs to the HypA/HybF family.

Involved in the maturation of [NiFe] hydrogenases. Required for nickel insertion into the metal center of the hydrogenase. This Methanococcus maripaludis (strain C7 / ATCC BAA-1331) protein is Hydrogenase maturation factor HypA.